Consider the following 259-residue polypeptide: Eukaryotic translation initiation factor 3 subunit G-2 (259 aa).

The 79-residue stretch at 179 to 257 (SAVRISNLSE…LILSVEWSKP (79 aa)) folds into the RRM domain.

The protein belongs to the eIF-3 subunit G family. Component of the eukaryotic translation initiation factor 3 (eIF-3) complex. The eIF-3 complex interacts with pix.

Its subcellular location is the cytoplasm. Its function is as follows. RNA-binding component of the eukaryotic translation initiation factor 3 (eIF-3) complex, which is involved in protein synthesis of a specialized repertoire of mRNAs and, together with other initiation factors, stimulates binding of mRNA and methionyl-tRNAi to the 40S ribosome. The eIF-3 complex specifically targets and initiates translation of a subset of mRNAs involved in cell proliferation. This subunit can bind 18S rRNA. The protein is Eukaryotic translation initiation factor 3 subunit G-2 of Drosophila mojavensis (Fruit fly).